The primary structure comprises 340 residues: 4-amino-5-hydroxymethyl-2-methylpyrimidine phosphate synthase THI12 (340 aa).

Lys62 is modified (N6-(pyridoxal phosphate)lysine). His66 is an active-site residue. Residue 115–118 (GEFG) coordinates pyridoxal 5'-phosphate. The CCCFC; essential for catalytic activity, may be the site of iron coordination motif lies at 195 to 199 (CCCFC).

It belongs to the NMT1/THI5 family. Homodimer. It depends on Fe cation as a cofactor.

The catalysed reaction is N(6)-(pyridoxal phosphate)-L-lysyl-[4-amino-5-hydroxymethyl-2-methylpyrimidine phosphate synthase] + L-histidyl-[4-amino-5-hydroxymethyl-2-methylpyrimidine phosphate synthase] + 2 Fe(3+) + 4 H2O = L-lysyl-[4-amino-5-hydroxymethyl-2-methylpyrimidine phosphate synthase] + (2S)-2-amino-5-hydroxy-4-oxopentanoyl-[4-amino-5-hydroxymethyl-2-methylpyrimidine phosphate synthase] + 4-amino-2-methyl-5-(phosphooxymethyl)pyrimidine + 3-oxopropanoate + 2 Fe(2+) + 2 H(+). It functions in the pathway cofactor biosynthesis; thiamine diphosphate biosynthesis. Its function is as follows. Responsible for the formation of the pyrimidine heterocycle in the thiamine biosynthesis pathway. Catalyzes the formation of hydroxymethylpyrimidine phosphate (HMP-P) from histidine and pyridoxal phosphate (PLP). The protein uses PLP and the active site histidine to form HMP-P, generating an inactive enzyme. The enzyme can only undergo a single turnover, which suggests it is a suicide enzyme. This Saccharomyces cerevisiae (strain ATCC 204508 / S288c) (Baker's yeast) protein is 4-amino-5-hydroxymethyl-2-methylpyrimidine phosphate synthase THI12.